We begin with the raw amino-acid sequence, 161 residues long: Ethylene-responsive transcription factor ERF070 (161 aa).

The segment at 1–35 (MKRIIRISFTDAEATDSSSDEDTEERGGASQTRRR) is disordered. A DNA-binding region (AP2/ERF) is located at residues 78–140 (KYRGVRQRPW…IGPHAPTNFG (63 aa)).

It belongs to the AP2/ERF transcription factor family. ERF subfamily.

The protein resides in the nucleus. Functionally, probably acts as a transcriptional activator. Binds to the GCC-box pathogenesis-related promoter element. May be involved in the regulation of gene expression by stress factors and by components of stress signal transduction pathways. The polypeptide is Ethylene-responsive transcription factor ERF070 (ERF070) (Arabidopsis thaliana (Mouse-ear cress)).